A 313-amino-acid chain; its full sequence is Expansin-like A4 (313 aa).

An N-terminal signal peptide occupies residues 1–30 (MDDNGDVHFCHRATAVVALLLLHLVVVANA). The Expansin-like EG45 domain occupies 59–173 (GGACGFGAAP…RRIPCEYRES (115 aa)). N-linked (GlcNAc...) asparagine glycosylation is present at asparagine 124. In terms of domain architecture, Expansin-like CBD spans 188–281 (THLAIRFLYQ…DWRPGEVYDT (94 aa)).

It belongs to the expansin family. Expansin-like A subfamily.

The protein resides in the secreted. This is Expansin-like A4 (EXLA4) from Oryza sativa subsp. japonica (Rice).